The sequence spans 660 residues: Methionine--tRNA ligase 1 (660 aa).

The 'HIGH' region motif lies at 15–25; the sequence is YYPSGKLHIGH. A 'KMSKS' region motif is present at residues 310–314; that stretch reads KMSKS. Position 313 (Lys-313) interacts with ATP. The tRNA-binding domain occupies 560-660; sequence DFFKVELRVA…QNIPNGTKIK (101 aa).

This sequence belongs to the class-I aminoacyl-tRNA synthetase family. MetG type 2B subfamily. In terms of assembly, homodimer.

The protein localises to the cytoplasm. The enzyme catalyses tRNA(Met) + L-methionine + ATP = L-methionyl-tRNA(Met) + AMP + diphosphate. In terms of biological role, is required not only for elongation of protein synthesis but also for the initiation of all mRNA translation through initiator tRNA(fMet) aminoacylation. The sequence is that of Methionine--tRNA ligase 1 from Bacillus anthracis.